The sequence spans 901 residues: Serine/threonine-protein kinase-like protein CR4 (901 aa).

The first 22 residues, 1–22 (MDIVPVVALCCCLVLLPSWAYG), serve as a signal peptide directing secretion. A run of 7 repeats spans residues 31-66 (VSYG…GAPS), 70-105 (FVGV…GVPQ), 123-158 (LCAL…TVTG), 160-193 (VSAI…GVIG), 201-234 (FQSI…QMST), 251-285 (MVSV…TLAP), and 290-328 (VYAI…AVSP). Positions 31-328 (VSYGEDGPVF…PLALPMAVSP (298 aa)) are 7 X 36 AA repeats. 2 N-linked (GlcNAc...) asparagine glycosylation sites follow: N149 and N177. N-linked (GlcNAc...) asparagine glycosylation is present at N280. The stretch at 335–389 (SCSHGYYEYANHGEVGSGSKTCKPANSRLCLPCSVGCPDDSYESSPCNATADRVC) is one TNFR-Cys repeat. Intrachain disulfides connect C336-C364, C367-C381, and C371-C389. An N-linked (GlcNAc...) asparagine glycan is attached at N382. A helical membrane pass occupies residues 423–443 (IFVAEIAFAVILVFSVTAIAC). In terms of domain architecture, Protein kinase spans 504-781 (FSEDSQVGKG…KVTTALERAL (278 aa)). Residues 510–518 (VGKGSFSCV) and K532 each bind ATP. D633 (proton acceptor) is an active-site residue. The tract at residues 845 to 901 (VTSSQRRKSSASEADMDGRTTTDGRNVGSSIGDGLRSLEEEISPASPQENLYLQHNF) is disordered. The span at 889-901 (ASPQENLYLQHNF) shows a compositional bias: polar residues.

It belongs to the protein kinase superfamily. Ser/Thr protein kinase family. As to quaternary structure, homodimer. Autophosphorylated. Specifically expressed in the epidermal cells of paleas and lemmas.

It is found in the cell membrane. Its subcellular location is the endosome. The protein localises to the multivesicular body membrane. The catalysed reaction is L-seryl-[protein] + ATP = O-phospho-L-seryl-[protein] + ADP + H(+). It carries out the reaction L-threonyl-[protein] + ATP = O-phospho-L-threonyl-[protein] + ADP + H(+). Its function is as follows. Receptor protein kinase. Could play a role in a differentiation signal. Controls formative cell division in meristems. Regulates epidermal cell differentiation in many organs. During floral organogenesis, required to maintain the interlocking of the palea and lemma, and fertility. Triggers culm elongation. The protein is Serine/threonine-protein kinase-like protein CR4 of Oryza sativa subsp. japonica (Rice).